A 345-amino-acid polypeptide reads, in one-letter code: Mitochondrial substrate carrier family protein J (345 aa).

Over 1–31 (MSSSHTIQETKEVHTKTNKRIQWDDLDPKRY) the chain is Mitochondrial intermembrane. Solcar repeat units follow at residues 30-118 (RYYF…VKQG), 129-217 (DLLF…SKSK), and 255-342 (EDPI…VKKL). Residues 32–52 (YFYNFLLGGSIDLLMFPLDVI) traverse the membrane as a helical segment. Residues 53 to 88 (RTRLQVQGSQNVIQSFPQYNGTFDGFKKLIRLEGKR) lie on the Mitochondrial matrix side of the membrane. Residues 89 to 110 (ALYKGFLTSECGYLCSRAIYFG) traverse the membrane as a helical segment. Residues 111–129 (SYEFVKQGFLKGRSDSDSD) lie on the Mitochondrial intermembrane side of the membrane. Residues 130–150 (LLFVTTISGAISEALASVIWV) traverse the membrane as a helical segment. Residues 151-191 (PFDVATQSVQIQGSLSKPKYKGGSDVFKKIYGERGIKGLYK) are Mitochondrial matrix-facing. A helical transmembrane segment spans residues 192-208 (GFGATIIRNVPYSGIWW). At 209-257 (GTYEISKSKLTQFNIRQKLGLKERSSHSLAVSAEIDKNNPSHEVENEDP) the chain is on the mitochondrial intermembrane side. Residues 258–278 (IIHFISGFFAAVFATSITNPL) traverse the membrane as a helical segment. The Mitochondrial matrix segment spans residues 279–316 (DVAKTRLQTGVFPENEKPNFYTIIKSTIRKEGIRALWK). A helical membrane pass occupies residues 317–337 (GLVPSLLTSTPYSMISIFLYE). The Mitochondrial intermembrane portion of the chain corresponds to 338–345 (EVKKLSLK).

The protein belongs to the mitochondrial carrier (TC 2.A.29) family.

Its subcellular location is the mitochondrion inner membrane. Functionally, mitochondrial solute carriers shuttle metabolites, nucleotides, and cofactors through the mitochondrial inner membrane. The chain is Mitochondrial substrate carrier family protein J (mcfJ) from Dictyostelium discoideum (Social amoeba).